We begin with the raw amino-acid sequence, 112 residues long: Urease subunit beta (112 aa).

It belongs to the urease beta subunit family. As to quaternary structure, heterotrimer of UreA (gamma), UreB (beta) and UreC (alpha) subunits. Three heterotrimers associate to form the active enzyme.

Its subcellular location is the cytoplasm. It catalyses the reaction urea + 2 H2O + H(+) = hydrogencarbonate + 2 NH4(+). The protein operates within nitrogen metabolism; urea degradation; CO(2) and NH(3) from urea (urease route): step 1/1. The sequence is that of Urease subunit beta from Polaromonas sp. (strain JS666 / ATCC BAA-500).